Consider the following 296-residue polypeptide: Pantothenate synthetase (296 aa).

31 to 38 serves as a coordination point for ATP; the sequence is MGYLHEGH. The Proton donor role is filled by H38. Q62 is a binding site for (R)-pantoate. Residue Q62 participates in beta-alanine binding. Position 148–151 (148–151) interacts with ATP; sequence GEKD. Q154 contributes to the (R)-pantoate binding site. Residues V177 and 185-188 each bind ATP; that span reads LSSR.

This sequence belongs to the pantothenate synthetase family. Homodimer.

It localises to the cytoplasm. It carries out the reaction (R)-pantoate + beta-alanine + ATP = (R)-pantothenate + AMP + diphosphate + H(+). It participates in cofactor biosynthesis; (R)-pantothenate biosynthesis; (R)-pantothenate from (R)-pantoate and beta-alanine: step 1/1. Functionally, catalyzes the condensation of pantoate with beta-alanine in an ATP-dependent reaction via a pantoyl-adenylate intermediate. This chain is Pantothenate synthetase, found in Deinococcus geothermalis (strain DSM 11300 / CIP 105573 / AG-3a).